Reading from the N-terminus, the 366-residue chain is MFSRLPTSLARNVARRAPTSFVRPSAAAAALRFSSTKTMTVREALNSAMAEELDRDDDVFLIGEEVAQYNGAYKVSKGLLDRFGERRVVDTPITEYGFTGLAVGAALKGLKPIVEFMSFNFSMQAIDHVVNSAAKTHYMSGGTQKCQMVFRGPNGAAVGVGAQHSQDFSPWYGSIPGLKVLVPYSAEDARGLLKAAIRDPNPVVFLENELLYGESFEISEEALSPEFTLPYKAKIEREGTDISIVTYTRNVQFSLEAAEILQKKYGVSAEVINLRSIRPLDTEAIIKTVKKTNHLITVESTFPSFGVGAEIVAQVMESEAFDYLDAPIQRVTGADVPTPYAKELEDFAFPDTPTIVKAVKEVLSIE.

A mitochondrion-targeting transit peptide spans 1-33 (MFSRLPTSLARNVARRAPTSFVRPSAAAAALRF). Glu-95 serves as a coordination point for thiamine diphosphate. 4 residues coordinate K(+): Ala-196, Ile-197, Asp-199, and Asn-201.

As to quaternary structure, pyruvate dehydrogenase (E1) is a tetramer of 2 alpha and 2 beta subunits. Eukaryotic pyruvate dehydrogenase (PDH) complexes are organized as a core consisting of the oligomeric dihydrolipoamide acetyl-transferase (E2), around which are arranged multiple copies of pyruvate dehydrogenase (E1), dihydrolipoamide dehydrogenase (E3) and protein X (E3BP) bound by non-covalent bonds. Thiamine diphosphate is required as a cofactor.

Its subcellular location is the mitochondrion matrix. The catalysed reaction is N(6)-[(R)-lipoyl]-L-lysyl-[protein] + pyruvate + H(+) = N(6)-[(R)-S(8)-acetyldihydrolipoyl]-L-lysyl-[protein] + CO2. Its function is as follows. The pyruvate dehydrogenase complex catalyzes the overall conversion of pyruvate to acetyl-CoA and CO(2). This Saccharomyces cerevisiae (strain ATCC 204508 / S288c) (Baker's yeast) protein is Pyruvate dehydrogenase E1 component subunit beta, mitochondrial (PDB1).